Reading from the N-terminus, the 557-residue chain is Transmembrane protein 209 (557 aa).

The chain crosses the membrane as a helical span at residues Val-28–Thr-48. An N-linked (GlcNAc...) asparagine glycan is attached at Asn-57. The helical transmembrane segment at Tyr-60 to Phe-80 threads the bilayer. Disordered regions lie at residues Pro-108–Pro-156 and Tyr-194–Glu-232. The segment covering Val-125–Leu-140 has biased composition (polar residues). Low complexity-rich tracts occupy residues Ser-141–Pro-156, Tyr-194–Ser-205, and Arg-219–Pro-228. 2 N-linked (GlcNAc...) asparagine glycosylation sites follow: Asn-273 and Asn-343.

Its subcellular location is the membrane. It is found in the nucleus envelope. The protein localises to the golgi apparatus. It localises to the cytoplasm. The chain is Transmembrane protein 209 (tmem209) from Xenopus tropicalis (Western clawed frog).